Reading from the N-terminus, the 272-residue chain is Glutamate racemase (272 aa).

Residues aspartate 13–serine 14 and tyrosine 45–glycine 46 contribute to the substrate site. The Proton donor/acceptor role is filled by cysteine 76. Asparagine 77–threonine 78 is a binding site for substrate. The Proton donor/acceptor role is filled by cysteine 187. Position 188 to 189 (threonine 188 to histidine 189) interacts with substrate.

Belongs to the aspartate/glutamate racemases family.

The catalysed reaction is L-glutamate = D-glutamate. It participates in cell wall biogenesis; peptidoglycan biosynthesis. Functionally, provides the (R)-glutamate required for cell wall biosynthesis. The sequence is that of Glutamate racemase from Roseiflexus sp. (strain RS-1).